A 247-amino-acid chain; its full sequence is LHFPL tetraspan subfamily member 4 protein (247 aa).

4 helical membrane-spanning segments follow: residues 22-42 (IGVLWAIFTICFAIINVVVFI), 97-117 (FFVLLSMVLILGCITCFALFF), 127-147 (ICAWMQLLAALCLVLGCMIFP), and 178-198 (ILAIIGILNALILSFLAFVLG).

The protein belongs to the LHFP family. As to quaternary structure, interacts with GABA(A) receptor subunits. Interacts with GABRB3. Interacts with GABRA2. Interacts with GABRG2. Identified in a complex of 720 kDa composed of LHFPL4, NLGN2, GABRA1, GABRB2, GABRG2 and GABRB3. Interacts with GABRA1. Interacts with NLGN2; leading to mutual regulation of protein level and synaptic clustering.

The protein localises to the cell projection. The protein resides in the dendrite. It localises to the postsynaptic cell membrane. In terms of biological role, plays a role in the regulation of inhibitory synapse formation and function by being involved in maintening gamma-aminobutyric acid receptors (GABAARs) clustering and their associated scaffold proteins at inhibitory synaptic sites. Acts in concert with NLGN2 to recruit or stabilize GABAARs. The polypeptide is LHFPL tetraspan subfamily member 4 protein (Bos taurus (Bovine)).